Reading from the N-terminus, the 244-residue chain is MKWSRGRGGLLAWLKRLIVRSVLVVIGAWLAGILLFSFLPVPFSAVMVDRQISAWLKGEFSYVAHSDWVSMEEIAPEMALAVMAAEDQKFPDHWGFDLDAIGQALKHNERNTQRIRGASTLSQQMVKNLFLWDGRSWVRKGLEAGITTGVELVWTKRRILTVYLNIAEFGPGIFGVEAAARRYFNKPASRLTASESALLAAVLPNPIRFRANAPSSYVIQRQQWILRQMRQMGGDAFLRANNLN.

Residues 23 to 43 traverse the membrane as a helical segment; sequence LVVIGAWLAGILLFSFLPVPF.

It belongs to the glycosyltransferase 51 family.

Its subcellular location is the cell inner membrane. It carries out the reaction [GlcNAc-(1-&gt;4)-Mur2Ac(oyl-L-Ala-gamma-D-Glu-L-Lys-D-Ala-D-Ala)](n)-di-trans,octa-cis-undecaprenyl diphosphate + beta-D-GlcNAc-(1-&gt;4)-Mur2Ac(oyl-L-Ala-gamma-D-Glu-L-Lys-D-Ala-D-Ala)-di-trans,octa-cis-undecaprenyl diphosphate = [GlcNAc-(1-&gt;4)-Mur2Ac(oyl-L-Ala-gamma-D-Glu-L-Lys-D-Ala-D-Ala)](n+1)-di-trans,octa-cis-undecaprenyl diphosphate + di-trans,octa-cis-undecaprenyl diphosphate + H(+). It functions in the pathway cell wall biogenesis; peptidoglycan biosynthesis. Its function is as follows. Peptidoglycan polymerase that catalyzes glycan chain elongation from lipid-linked precursors. The protein is Biosynthetic peptidoglycan transglycosylase of Pectobacterium carotovorum subsp. carotovorum (strain PC1).